The sequence spans 400 residues: MTTLGTPLSPSATKVMLLGSGELGKEVLIALQRLGVETIAVDRYENAPGQQVAHHARTITMSDGEQLKALIEAERPDLVVPEIEAIATPMLEALEAAGVVRVIPTARAARLTMDREGIRRLAAETLGLPTSPYKFCDSLEELQAAIDGGIGYPCVVKPVMSSSGKGQSKIDGPADVKAAWDYAMAGGRVSHGRVIVEGFIDFDYEITLLTVRAVGANGEVETHFCEPIGHVQVAGDYVESWQPHPMHPKALETSQHIARAVTADLGGQGLFGVELFVKGEQVWFSEVSPRPHDTGMVTMITQWQNEFELHARAILGLPVSTALRAPGASAVIYGGVEAEGIVFDGVDEALRVPQTELRLFGKPESFTKRRMGVALAYAEDVDTARERAKEAAGKVKPRKA.

Residues 22–23 and glutamate 82 contribute to the N(1)-(5-phospho-beta-D-ribosyl)glycinamide site; that span reads EL. Residues arginine 115, lysine 157, 162–167, 197–200, and glutamate 205 contribute to the ATP site; these read SSGKGQ and EGFI. One can recognise an ATP-grasp domain in the interval 120–315; it reads RLAAETLGLP…EFELHARAIL (196 aa). 2 residues coordinate Mg(2+): glutamate 274 and glutamate 286. Residues aspartate 293, lysine 362, and 369–370 each bind N(1)-(5-phospho-beta-D-ribosyl)glycinamide; that span reads RR.

The protein belongs to the PurK/PurT family. Homodimer.

The catalysed reaction is N(1)-(5-phospho-beta-D-ribosyl)glycinamide + formate + ATP = N(2)-formyl-N(1)-(5-phospho-beta-D-ribosyl)glycinamide + ADP + phosphate + H(+). It functions in the pathway purine metabolism; IMP biosynthesis via de novo pathway; N(2)-formyl-N(1)-(5-phospho-D-ribosyl)glycinamide from N(1)-(5-phospho-D-ribosyl)glycinamide (formate route): step 1/1. Functionally, involved in the de novo purine biosynthesis. Catalyzes the transfer of formate to 5-phospho-ribosyl-glycinamide (GAR), producing 5-phospho-ribosyl-N-formylglycinamide (FGAR). Formate is provided by PurU via hydrolysis of 10-formyl-tetrahydrofolate. In Cupriavidus metallidurans (strain ATCC 43123 / DSM 2839 / NBRC 102507 / CH34) (Ralstonia metallidurans), this protein is Formate-dependent phosphoribosylglycinamide formyltransferase.